A 359-amino-acid polypeptide reads, in one-letter code: DNA replication and repair protein RecF (359 aa).

Residue 30 to 37 (GANGSGKT) participates in ATP binding.

Belongs to the RecF family.

The protein localises to the cytoplasm. Its function is as follows. The RecF protein is involved in DNA metabolism; it is required for DNA replication and normal SOS inducibility. RecF binds preferentially to single-stranded, linear DNA. It also seems to bind ATP. The sequence is that of DNA replication and repair protein RecF from Vibrio atlanticus (strain LGP32) (Vibrio splendidus (strain Mel32)).